The following is a 307-amino-acid chain: Aspartate carbamoyltransferase catalytic subunit (307 aa).

Carbamoyl phosphate is bound by residues arginine 59 and threonine 60. Lysine 87 lines the L-aspartate pocket. Carbamoyl phosphate is bound by residues arginine 109, histidine 137, and glutamine 140. 2 residues coordinate L-aspartate: arginine 170 and arginine 224. Glycine 265 and proline 266 together coordinate carbamoyl phosphate.

The protein belongs to the aspartate/ornithine carbamoyltransferase superfamily. ATCase family. As to quaternary structure, heterododecamer (2C3:3R2) of six catalytic PyrB chains organized as two trimers (C3), and six regulatory PyrI chains organized as three dimers (R2).

The enzyme catalyses carbamoyl phosphate + L-aspartate = N-carbamoyl-L-aspartate + phosphate + H(+). The protein operates within pyrimidine metabolism; UMP biosynthesis via de novo pathway; (S)-dihydroorotate from bicarbonate: step 2/3. In terms of biological role, catalyzes the condensation of carbamoyl phosphate and aspartate to form carbamoyl aspartate and inorganic phosphate, the committed step in the de novo pyrimidine nucleotide biosynthesis pathway. This Cytophaga hutchinsonii (strain ATCC 33406 / DSM 1761 / CIP 103989 / NBRC 15051 / NCIMB 9469 / D465) protein is Aspartate carbamoyltransferase catalytic subunit.